The chain runs to 111 residues: uncharacterized protein (111 aa).

This sequence to B.subtilis XkdW.

This is an uncharacterized protein from Bacillus subtilis (strain 168).